The primary structure comprises 149 residues: Calmodulin (149 aa).

Alanine 2 bears the N-acetylalanine mark. EF-hand domains follow at residues 8 to 43 (EQIAEFKEAFALFDKDGDGTITTKELGTVMRSLGQN), 44 to 79 (PTEAELQDMINEVDADGNGTIDFPEFLSLMARKMKE), 81 to 116 (DSEEELIEAFKVFDRDGNGLISAAELRHVMTNLGEK), and 117 to 149 (LTDDEVDEMIREADIDGDGHINYEEFVRMMVSK). An N6,N6-dimethyllysine modification is found at lysine 14. 14 residues coordinate Ca(2+): aspartate 21, aspartate 23, aspartate 25, threonine 27, glutamate 32, aspartate 57, aspartate 59, asparagine 61, threonine 63, glutamate 68, aspartate 94, aspartate 96, asparagine 98, and glutamate 105. Lysine 116 carries the post-translational modification N6,N6,N6-trimethyllysine. Residues aspartate 130, aspartate 132, aspartate 134, histidine 136, and glutamate 141 each contribute to the Ca(2+) site.

It belongs to the calmodulin family. Post-translationally, the pantophobiac mutant CAM2 is undermethylated on Lys-116.

Functionally, calmodulin mediates the control of a large number of enzymes, ion channels and other proteins by Ca(2+). Among the enzymes to be stimulated by the calmodulin-Ca(2+) complex are a number of protein kinases and phosphatases. This chain is Calmodulin (CAM), found in Paramecium tetraurelia.